Reading from the N-terminus, the 235-residue chain is Flavonoid 3',5'-methyltransferase (235 aa).

S-adenosyl-L-methionine-binding positions include V51, E73, 75-76 (GV), S81, D99, and A128. An a divalent metal cation-binding site is contributed by D151. D153 is an S-adenosyl-L-methionine binding site. 2 residues coordinate a divalent metal cation: D177 and N178.

This sequence belongs to the class I-like SAM-binding methyltransferase superfamily. Cation-dependent O-methyltransferase family. CCoAMT subfamily. The cofactor is a divalent metal cation.

It is found in the cytoplasm. The catalysed reaction is S-adenosyl-L-methionine + a 3'-hydroxyflavonoid = S-adenosyl-L-homocysteine + a 3'-methoxyflavonoid.. It catalyses the reaction S-adenosyl-L-methionine + a 5'-hydroxy-3'-methoxyflavonoid = S-adenosyl-L-homocysteine + a 3',5'-dimethoxyflavonoid.. It functions in the pathway pigment biosynthesis; anthocyanin biosynthesis. In terms of biological role, mediates O-methylation of anthocyanins. Anthocyanins are major pigments in grapes: at ripening initiation in red grapevine berries, the exocarp turns color from green to red and then to purple due to the accumulation and extent of methylation of anthocyanins. Catalyzes both 3' and 5' O-methylation of anthocyanins, with a preference for glycosylated substrates. Active on both anthocyanins and flavonols in vitro. Most active with delphinidin 3-glucoside but also acts on cyanidin 3-glucoside, cyanidin, myricetin, quercetin and quercetin 3-glucoside. Not able to methylate flavan type skeletons with chiral centers, such as catechins or dihydroquercetin. The protein is Flavonoid 3',5'-methyltransferase (FAOMT) of Vitis vinifera (Grape).